The sequence spans 480 residues: MPIFVNTVYCKNILALSMTKKFKTIIDAIGGNIIVNSTILKKLSPYFRTHLRQKYTKNKDPVTRVCLDLDIHSLTSIVIYSYTGKVYIDSHNVVNLLRASILTSVEFIIYTCINFILRDFRKEYCVECYMMGIEYGLSNLLCHTKNFIAKHFLELEDDIIDNFDYLSMKLILESDELNVPDEDYVVDFVIKWYIKRRNKLGNLLLLIKNVIRSNYLSPRGINNVKWILDCTKIFHCDKQPRKSYKYPFIEYPMNMDQIIDIFHMCTSTHVGEVVYLIGGWMNNEIHNNAIAVNYISNNWIPIPPMNSPRLYATGIPANNKLYVVGGLPNPTSVERWFHGDAAWVNMPSLLKPRCNPAVASINNVIYVMGGHSETDTTTEYLLPNHDQWQFGPSTYYPHYKSCALVFGRRLFLVGRNAEFYCESSNTWTLIDDPIYPRDNPELIIVDNKLLLIGGFYRGSYIDTIEVYNHHTYSWNIWDGK.

The 81-residue stretch at 10-90 folds into the BTB domain; it reads CKNILALSMT…SYTGKVYIDS (81 aa). A BACK domain is found at 125–223; that stretch reads CVECYMMGIE…NYLSPRGINN (99 aa). Kelch repeat units follow at residues 273 to 319, 320 to 363, 365 to 408, 410 to 447, and 448 to 480; these read VVYL…PANN, KLYV…SINN, IYVM…VFGR, LFLVGRNAEFYCESSNTWTLIDDPIYPRDNPELIIVDN, and KLLLIGGFYRGSYIDTIEVYNHHTYSWNIWDGK.

It belongs to the orthopoxvirus OPG047 family.

Might have a role in the suppression of host immune response. This chain is Immune evasion protein OPG047 (OPG047), found in Vaccinia virus (strain Copenhagen) (VACV).